Reading from the N-terminus, the 277-residue chain is Shikimate dehydrogenase (NADP(+)) (277 aa).

Shikimate is bound by residues 15–17 (SKS) and Thr62. Lys66 acts as the Proton acceptor in catalysis. An NADP(+)-binding site is contributed by Glu78. Shikimate-binding residues include Asn87 and Asp103. NADP(+)-binding positions include 127-131 (GAGGA), 151-156 (NRTHEK), and Gly238.

Belongs to the shikimate dehydrogenase family. Homodimer.

It carries out the reaction shikimate + NADP(+) = 3-dehydroshikimate + NADPH + H(+). The protein operates within metabolic intermediate biosynthesis; chorismate biosynthesis; chorismate from D-erythrose 4-phosphate and phosphoenolpyruvate: step 4/7. In terms of biological role, involved in the biosynthesis of the chorismate, which leads to the biosynthesis of aromatic amino acids. Catalyzes the reversible NADPH linked reduction of 3-dehydroshikimate (DHSA) to yield shikimate (SA). The polypeptide is Shikimate dehydrogenase (NADP(+)) (Shewanella frigidimarina (strain NCIMB 400)).